Consider the following 377-residue polypeptide: Chaperone protein DnaJ (377 aa).

A J domain is found at 5–70 (DFYEVLGVER…SKRAAYDQYG (66 aa)). The segment at 136–214 (GTTVTIRVPT…CHGQGRVEEQ (79 aa)) adopts a CR-type zinc-finger fold. Zn(2+) contacts are provided by cysteine 149, cysteine 152, cysteine 166, cysteine 169, cysteine 188, cysteine 191, cysteine 202, and cysteine 205. CXXCXGXG motif repeat units lie at residues 149 to 156 (CKTCNGSG), 166 to 173 (CTTCGGIG), 188 to 195 (CPRCHGTG), and 202 to 209 (CGSCHGQG).

The protein belongs to the DnaJ family. In terms of assembly, homodimer. It depends on Zn(2+) as a cofactor.

The protein localises to the cytoplasm. Its function is as follows. Participates actively in the response to hyperosmotic and heat shock by preventing the aggregation of stress-denatured proteins and by disaggregating proteins, also in an autonomous, DnaK-independent fashion. Unfolded proteins bind initially to DnaJ; upon interaction with the DnaJ-bound protein, DnaK hydrolyzes its bound ATP, resulting in the formation of a stable complex. GrpE releases ADP from DnaK; ATP binding to DnaK triggers the release of the substrate protein, thus completing the reaction cycle. Several rounds of ATP-dependent interactions between DnaJ, DnaK and GrpE are required for fully efficient folding. Also involved, together with DnaK and GrpE, in the DNA replication of plasmids through activation of initiation proteins. This Pseudomonas paraeruginosa (strain DSM 24068 / PA7) (Pseudomonas aeruginosa (strain PA7)) protein is Chaperone protein DnaJ.